Consider the following 917-residue polypeptide: Protein translocase subunit SecA (917 aa).

Residues glutamine 87, 105-109, and aspartate 516 each bind ATP; that span reads GEGKT. Residues cysteine 901, cysteine 903, cysteine 912, and histidine 913 each coordinate Zn(2+).

This sequence belongs to the SecA family. As to quaternary structure, monomer and homodimer. Part of the essential Sec protein translocation apparatus which comprises SecA, SecYEG and auxiliary proteins SecDF-YajC and YidC. Requires Zn(2+) as cofactor.

The protein resides in the cell inner membrane. The protein localises to the cytoplasm. It catalyses the reaction ATP + H2O + cellular proteinSide 1 = ADP + phosphate + cellular proteinSide 2.. Functionally, part of the Sec protein translocase complex. Interacts with the SecYEG preprotein conducting channel. Has a central role in coupling the hydrolysis of ATP to the transfer of proteins into and across the cell membrane, serving both as a receptor for the preprotein-SecB complex and as an ATP-driven molecular motor driving the stepwise translocation of polypeptide chains across the membrane. This is Protein translocase subunit SecA from Acidovorax sp. (strain JS42).